Reading from the N-terminus, the 506-residue chain is Photosystem II CP47 reaction center protein (506 aa).

The next 6 membrane-spanning stretches (helical) occupy residues 21 to 36, 101 to 115, 140 to 156, 203 to 218, 237 to 252, and 457 to 472; these read SVHIMHTALVAGWAGS, ILFSGLCFLAAIWHW, GIHLFLSGLGCFGFGAF, IAAGTLGILAGLFHLS, VLSSSIAAVFFAAFVV, and SFALLFFFGHIWHGAR.

The protein belongs to the PsbB/PsbC family. PsbB subfamily. In terms of assembly, PSII is composed of 1 copy each of membrane proteins PsbA, PsbB, PsbC, PsbD, PsbE, PsbF, PsbH, PsbI, PsbJ, PsbK, PsbL, PsbM, PsbT, PsbX, PsbY, PsbZ, Psb30/Ycf12, at least 3 peripheral proteins of the oxygen-evolving complex and a large number of cofactors. It forms dimeric complexes. Requires Binds multiple chlorophylls. PSII binds additional chlorophylls, carotenoids and specific lipids. as cofactor.

The protein resides in the plastid. The protein localises to the chloroplast thylakoid membrane. In terms of biological role, one of the components of the core complex of photosystem II (PSII). It binds chlorophyll and helps catalyze the primary light-induced photochemical processes of PSII. PSII is a light-driven water:plastoquinone oxidoreductase, using light energy to abstract electrons from H(2)O, generating O(2) and a proton gradient subsequently used for ATP formation. This is Photosystem II CP47 reaction center protein from Cucumis sativus (Cucumber).